A 933-amino-acid polypeptide reads, in one-letter code: Clumping factor A (933 aa).

A signal peptide spans M1–A39. The YSIRK-G/S signaling motif signature appears at H9 to S20. Disordered regions lie at residues S34–D200 and F529–E904. A ligand binding A region region spans residues S40 to P542. Over residues S47–A65 the composition is skewed to low complexity. Residues T71–N105 are compositionally biased toward polar residues. The segment covering A106–Q132 has biased composition (low complexity). Residues S133–D200 show a composition bias toward polar residues. The span at Q547–P565 shows a compositional bias: acidic residues. Low complexity predominate over residues G566–D598. Over residues S599–S861 the composition is skewed to acidic residues. Over residues D862 to G880 the composition is skewed to low complexity. The span at N887 to L896 shows a compositional bias: basic and acidic residues. The short motif at L896 to G900 is the LPXTG sorting signal element. A Pentaglycyl murein peptidoglycan amidated threonine modification is found at T899. The propeptide at G900–K933 is removed by sortase.

The protein belongs to the serine-aspartate repeat-containing protein (SDr) family.

It localises to the secreted. Its subcellular location is the cell wall. Its function is as follows. Cell surface-associated protein implicated in virulence. Promotes bacterial attachment exclusively to the gamma-chain of human fibrinogen. Induces formation of bacterial clumps, which diminish the ability of group IIA phospholipase A2 to cause bacterial phospholipid hydrolysis and killing. Significantly decreases macrophage phagocytosis possibly thanks to the clumps, clumped bacteria being too large to be phagocytosed. Dominant factor responsible for human platelet aggregation, which may be an important mechanism for initiating infective endocarditis. Enhances spleen cell proliferative response in vitro, contributing significantly to the immunostimulatory activity of S.aureus. The protein is Clumping factor A (clfA) of Staphylococcus aureus (strain Newman).